Here is a 275-residue protein sequence, read N- to C-terminus: Phospholipid scramblase (275 aa).

The chain crosses the membrane as a helical span at residues 256 to 272 (WKMMLLAFALFLDYMYY).

The protein belongs to the phospholipid scramblase family. As to quaternary structure, forms homooligomers in the presence of calcium. Ca(2+) is required as a cofactor. It depends on Mg(2+) as a cofactor.

The protein localises to the membrane. The protein resides in the cell membrane. The enzyme catalyses a 1,2-diacyl-sn-glycero-3-phosphoethanolamine(in) = a 1,2-diacyl-sn-glycero-3-phosphoethanolamine(out). Functionally, catalyzes calcium-induced ATP-independent rapid bidirectional and non-specific movement of phospholipids (lipid scrambling or lipid flip-flop) between the inner and outer leaflet of the plasma membrane resulting in collapse of the phospholipid asymmetry. Preferentially, mediates calcium-dependent phosphatidylethanolamine externalization. During the liver stage, plays a role in the interaction with, and thus invasion of, host hepatocytes. Dispensable for host erythrocyte invasion and asexual parasite development. The chain is Phospholipid scramblase from Plasmodium falciparum (isolate 3D7).